The chain runs to 304 residues: E3 ubiquitin-protein ligase CHIP (304 aa).

Basic and acidic residues predominate over residues 1 to 10; the sequence is MKGKEEKEGG. Residues 1–30 form a disordered region; sequence MKGKEEKEGGARLGTGGGGSPDKSPSAQEL. K2 participates in a covalent cross-link: Glycyl lysine isopeptide (Lys-Gly) (interchain with G-Cter in ubiquitin). The span at 11-20 shows a compositional bias: gly residues; sequence ARLGTGGGGS. Residue S20 is modified to Phosphoserine. Residue K23 forms a Glycyl lysine isopeptide (Lys-Gly) (interchain with G-Cter in ubiquitin) linkage. A phosphoserine mark is found at S24 and S26. 3 TPR repeats span residues 27–60, 61–94, and 96–128; these read AQEL…NPLV, AVYY…DGQS, and KAHF…AKEQ. Positions 102–201 are required for interaction with MAPK7; that stretch reads GQCQLEMESY…GHIRAQQACI (100 aa). The required for interaction with and ubiquitination of MYOCD stretch occupies residues 143 to 197; that stretch reads AKKKRWNSIEERRIHQESELHSYLTRLIAAERERELEECQRNHEGHEDDGHIRAQ. The required for interaction with FOXO1 stretch occupies residues 144–198; the sequence is KKKRWNSIEERRIHQESELHSYLTRLIAAERERELEECQRNHEGHEDDGHIRAQQ. Residues 144-304 form a required for ubiquitination of FOXO1 region; the sequence is KKKRWNSIEE…ISENGWVEDY (161 aa). S150 carries the phosphoserine modification. Residues K222 and K256 each participate in a glycyl lysine isopeptide (Lys-Gly) (interchain with G-Cter in ubiquitin) cross-link. The 75-residue stretch at 227–301 folds into the U-box domain; that stretch reads DIPDYLCGKI…DAFISENGWV (75 aa). S274 carries the post-translational modification Phosphoserine.

As to quaternary structure, homodimer. Interacts with BAG2, and with the E2 ubiquitin conjugating enzymes UBE2D1, UBE2D2 and UBE2D3. Detected in a ternary complex containing STUB1, HSPA1A and HSPBP1. Part of a complex composed of STUB1/CHIP, VCP/p97, CHRNA3, and UBXN2A that modulates the ubiquitination and endoplasmic reticulum-associated degradation (ERAD) of CHRNA3. Within the complex UBXN2A acts as a scaffold protein required for the interaction of CHRNA3 with VCP/p97, this interaction also inhibits CHRNA3 ubiquitination by STUB1/CHIP and subsequently ERAD. Interacts with MKKS. Interacts with DNAAF4. Interacts (via the U-box domain) with the UBE2V2-UBE2N heterodimer; the complex has a specific 'Lys-63'-linked polyubiquitination activity. Interacts (when monoubiquitinated) with ATXN3. Interacts with UBE2W. Interacts with DNAJB6. Interacts with FLCN and HSP90AA1. Interacts with HSP90. Interacts with UBE2N and UBE2V1. Interacts (via TPR repeats) with HSPA8 (via C-terminus). Interacts (via TPR repeats) with HSPA1A (via C-terminus). Interacts with the non-acetylated form of HSPA1A and HSPA1B. Interacts with SMAD3 and HSP90AB1. Interacts with UBE4B. Interacts with PRMT5. Interacts with MYOCD (via C-terminus). Interacts with FOXO1 (when phosphorylated on 'Ser-253'). Interacts with MAPK7/ERK5; the interaction is enhanced in the presence of IGF1 or MAP2K5 and promotes STUB1/CHIP E3 ligase activity. Interacts with and ubiquitinates ESR1; the interaction is promoted in the absence of estradiol (17-beta-estradiol/E2). Interacts with ESR2. Interacts with and ubiquitinates NFATC3; HSPA1A/HSP70 is required as a co-chaperone. In macrophages, interacts with PAQR3; the interaction promotes PPARG poylubiquitination and STUB1-mediated degradation. Component of the chaperone-assisted selective autophagy (CASA) complex consisting of BAG3, HSPA8/HSC70, HSPB8 and STUB1/CHIP. In terms of processing, auto-ubiquitinated; mediated by UBE2D1 and UBE2D2 and enhanced in the presence of MAP2K5. Monoubiquitinated at Lys-2 following cell stress by UBE2W, promoting the interaction with ATXN3. Expressed in the brain.

The protein resides in the cytoplasm. Its subcellular location is the nucleus. It localises to the mitochondrion. It catalyses the reaction S-ubiquitinyl-[E2 ubiquitin-conjugating enzyme]-L-cysteine + [acceptor protein]-L-lysine = [E2 ubiquitin-conjugating enzyme]-L-cysteine + N(6)-ubiquitinyl-[acceptor protein]-L-lysine.. It functions in the pathway protein modification; protein ubiquitination. Functionally, E3 ubiquitin-protein ligase which targets misfolded chaperone substrates towards proteasomal degradation. Plays a role in the maintenance of mitochondrial morphology and promotes mitophagic removal of dysfunctional mitochondria; thereby acts as a protector against apoptosis in response to cellular stress. Negatively regulates vascular smooth muscle contraction, via degradation of the transcriptional activator MYOCD and subsequent loss of transcription of genes involved in vascular smooth muscle contraction. Promotes survival and proliferation of cardiac smooth muscle cells via ubiquitination and degradation of FOXO1, resulting in subsequent repression of FOXO1-mediated transcription of pro-apoptotic genes. Ubiquitinates ICER-type isoforms of CREM and targets them for proteasomal degradation, thereby acts as a positive effector of MAPK/ERK-mediated inhibition of apoptosis in cardiomyocytes. Inhibits lipopolysaccharide-induced apoptosis and hypertrophy in cardiomyocytes, via ubiquitination and subsequent proteasomal degradation of NFATC3. Collaborates with ATXN3 in the degradation of misfolded chaperone substrates: ATXN3 restricting the length of ubiquitin chain attached to STUB1/CHIP substrates and preventing further chain extension. Ubiquitinates NOS1 in concert with Hsp70 and Hsp40. Modulates the activity of several chaperone complexes, including Hsp70, Hsc70 and Hsp90. Ubiquitinates CHRNA3 targeting it for endoplasmic reticulum-associated degradation in cortical neurons, as part of the STUB1-VCP-UBXN2A complex. Ubiquitinates and promotes ESR1 proteasomal degradation in response to age-related circulating estradiol (17-beta-estradiol/E2) decline, thereby promotes neuronal apoptosis in response to ischemic reperfusion injury. Mediates transfer of non-canonical short ubiquitin chains to HSPA8 that have no effect on HSPA8 degradation. Mediates polyubiquitination of DNA polymerase beta (POLB) at 'Lys-41', 'Lys-61' and 'Lys-81', thereby playing a role in base-excision repair: catalyzes polyubiquitination by amplifying the HUWE1/ARF-BP1-dependent monoubiquitination and leading to POLB-degradation by the proteasome. Mediates polyubiquitination of CYP3A4. Ubiquitinates EPHA2 and may regulate the receptor stability and activity through proteasomal degradation. Acts as a co-chaperone for HSPA1A and HSPA1B chaperone proteins and promotes ubiquitin-mediated protein degradation. Negatively regulates the suppressive function of regulatory T-cells (Treg) during inflammation by mediating the ubiquitination and degradation of FOXP3 in a HSPA1A/B-dependent manner. Catalyzes monoubiquitination of SIRT6, preventing its degradation by the proteasome. Likely mediates polyubiquitination and down-regulates plasma membrane expression of PD-L1/CD274, an immune inhibitory ligand critical for immune tolerance to self and antitumor immunity. Negatively regulates TGF-beta signaling by modulating the basal level of SMAD3 via ubiquitin-mediated degradation. Plays a role in the degradation of TP53. Mediates ubiquitination of RIPK3 leading to its subsequent proteasome-dependent degradation. May regulate myosin assembly in striated muscles together with UBE4B and VCP/p97 by targeting myosin chaperone UNC45B for proteasomal degradation. Ubiquitinates PPARG in macrophages playing a role in M2 macrophages polarization and angiogenesis. The sequence is that of E3 ubiquitin-protein ligase CHIP from Mus musculus (Mouse).